The primary structure comprises 433 residues: O-methyltransferase aclM (433 aa).

The stretch at 5–37 (LTDAERTALQTSLEALNRQVEATRNILRSNSQK) forms a coiled coil. S-adenosyl-L-methionine contacts are provided by residues Asp-277 and 311-313 (GDF). The active-site Proton acceptor is the His-330.

The protein belongs to the class I-like SAM-binding methyltransferase superfamily. Cation-independent O-methyltransferase family. COMT subfamily.

It participates in mycotoxin biosynthesis. Its function is as follows. O-methyltransferase; part of the gene cluster that mediates the biosynthesis of aspirochlorine (or antibiotic A30641), an unusual halogenated spiro compound with distinctive antifungal properties due to selective inhibition of protein biosynthesis, and which is also active against bacteria, viruses, and murine tumor cells. The non-ribosomal peptide synthetase (NRPS) aclP is responsible the formation of the diketopiperazine (DKP) core from the condensation of 2 phenylalanine residues. One Phe residue is tailored into chlorotyrosine by hydroxylation and chlorination, whereas the second Phe undergoes an unprecedented C-C bond cleavage to be converted into glycine. After formation of the DKP, sulfur is incorporated into the DKP by conjugation with glutathione by aclG, followed by its stepwise degradation to the thiol by aclI, aclJ and aclK, and the dithiol oxidation by aclT. In addition, oxygenases (aclB, aclC, aclL and aclO) and O-methyltransferases (aclM and aclU) act as tailoring enzymes to produce the intermediate dechloroaspirochlorine. Ultimately, chlorination of dechloroaspirochlorine by the halogenase aclH is the last step in the aspirochlorine pathway. This Aspergillus oryzae (strain ATCC 42149 / RIB 40) (Yellow koji mold) protein is O-methyltransferase aclM.